A 225-amino-acid polypeptide reads, in one-letter code: Phosphatidylserine decarboxylase proenzyme (225 aa).

The Schiff-base intermediate with substrate; via pyruvic acid role is filled by Ser-188. Ser-188 is subject to Pyruvic acid (Ser); by autocatalysis.

Belongs to the phosphatidylserine decarboxylase family. PSD-A subfamily. In terms of assembly, heterodimer of a large membrane-associated beta subunit and a small pyruvoyl-containing alpha subunit. The cofactor is pyruvate. In terms of processing, is synthesized initially as an inactive proenzyme. Formation of the active enzyme involves a self-maturation process in which the active site pyruvoyl group is generated from an internal serine residue via an autocatalytic post-translational modification. Two non-identical subunits are generated from the proenzyme in this reaction, and the pyruvate is formed at the N-terminus of the alpha chain, which is derived from the carboxyl end of the proenzyme. The post-translation cleavage follows an unusual pathway, termed non-hydrolytic serinolysis, in which the side chain hydroxyl group of the serine supplies its oxygen atom to form the C-terminus of the beta chain, while the remainder of the serine residue undergoes an oxidative deamination to produce ammonia and the pyruvoyl prosthetic group on the alpha chain.

It is found in the cell membrane. It carries out the reaction a 1,2-diacyl-sn-glycero-3-phospho-L-serine + H(+) = a 1,2-diacyl-sn-glycero-3-phosphoethanolamine + CO2. Its pathway is phospholipid metabolism; phosphatidylethanolamine biosynthesis; phosphatidylethanolamine from CDP-diacylglycerol: step 2/2. Functionally, catalyzes the formation of phosphatidylethanolamine (PtdEtn) from phosphatidylserine (PtdSer). The polypeptide is Phosphatidylserine decarboxylase proenzyme (Parvibaculum lavamentivorans (strain DS-1 / DSM 13023 / NCIMB 13966)).